The chain runs to 188 residues: Peptidyl-tRNA hydrolase (188 aa).

F15 lines the tRNA pocket. The active-site Proton acceptor is the H20. TRNA is bound by residues Y64, N66, and N112.

The protein belongs to the PTH family. As to quaternary structure, monomer.

The protein localises to the cytoplasm. It carries out the reaction an N-acyl-L-alpha-aminoacyl-tRNA + H2O = an N-acyl-L-amino acid + a tRNA + H(+). In terms of biological role, hydrolyzes ribosome-free peptidyl-tRNAs (with 1 or more amino acids incorporated), which drop off the ribosome during protein synthesis, or as a result of ribosome stalling. Its function is as follows. Catalyzes the release of premature peptidyl moieties from peptidyl-tRNA molecules trapped in stalled 50S ribosomal subunits, and thus maintains levels of free tRNAs and 50S ribosomes. The polypeptide is Peptidyl-tRNA hydrolase (Borreliella burgdorferi (strain ATCC 35210 / DSM 4680 / CIP 102532 / B31) (Borrelia burgdorferi)).